A 59-amino-acid polypeptide reads, in one-letter code: Large ribosomal subunit protein bL32c (59 aa).

Positions 1-20 (MAVPKKRTSKSKKRIRKSVW) are disordered.

It belongs to the bacterial ribosomal protein bL32 family.

The protein resides in the plastid. Its subcellular location is the chloroplast. This Angiopteris evecta (Mule's foot fern) protein is Large ribosomal subunit protein bL32c.